We begin with the raw amino-acid sequence, 59 residues long: Chromatin protein Cren7 (59 aa).

The protein belongs to the Cren7 family. As to quaternary structure, monomer. Post-translationally, methylated at multiple sites, to varying extents.

The protein localises to the chromosome. It is found in the cytoplasm. Functionally, a chromatin protein, binds double-stranded DNA without sequence specificity. Constrains negative DNA supercoils. The polypeptide is Chromatin protein Cren7 (Pyrobaculum arsenaticum (strain DSM 13514 / JCM 11321 / PZ6)).